The primary structure comprises 678 residues: Glycine--tRNA ligase beta subunit (678 aa).

Belongs to the class-II aminoacyl-tRNA synthetase family. In terms of assembly, tetramer of two alpha and two beta subunits.

It is found in the cytoplasm. It catalyses the reaction tRNA(Gly) + glycine + ATP = glycyl-tRNA(Gly) + AMP + diphosphate. The protein is Glycine--tRNA ligase beta subunit of Streptococcus pneumoniae (strain Taiwan19F-14).